Reading from the N-terminus, the 147-residue chain is Endoribonuclease YbeY (147 aa).

3 residues coordinate Zn(2+): His109, His113, and His119.

It belongs to the endoribonuclease YbeY family. The cofactor is Zn(2+).

The protein resides in the cytoplasm. Single strand-specific metallo-endoribonuclease involved in late-stage 70S ribosome quality control and in maturation of the 3' terminus of the 16S rRNA. This Thiobacillus denitrificans (strain ATCC 25259 / T1) protein is Endoribonuclease YbeY.